Reading from the N-terminus, the 500-residue chain is L-arabinose isomerase (500 aa).

E306, E333, H349, and H448 together coordinate Mn(2+).

It belongs to the arabinose isomerase family. Mn(2+) is required as a cofactor.

It carries out the reaction beta-L-arabinopyranose = L-ribulose. The protein operates within carbohydrate degradation; L-arabinose degradation via L-ribulose; D-xylulose 5-phosphate from L-arabinose (bacterial route): step 1/3. Its function is as follows. Catalyzes the conversion of L-arabinose to L-ribulose. This Shewanella sp. (strain ANA-3) protein is L-arabinose isomerase.